Consider the following 901-residue polypeptide: Glutamate receptor 2.1 (901 aa).

A signal peptide spans 1–25 (MKRENNLVLSLLFFVIVFLMQVGEA). Over 26 to 574 (QNRITNVNVG…SSTIFLMPLT (549 aa)) the chain is Extracellular. 9 N-linked (GlcNAc...) asparagine glycosylation sites follow: Asn46, Asn53, Asn204, Asn267, Asn331, Asn342, Asn461, Asn477, and Asn536. Residues 575-595 (LALWLISLLSFFIIGLVVWVL) form a helical membrane-spanning segment. Residues 596 to 604 (EHRVNPDFD) are Cytoplasmic-facing. Residues 605–625 (GPGQYQLSTIFWFSFSIMVFA) form a helical membrane-spanning segment. The Cytoplasmic portion of the chain corresponds to 626–629 (PRER). The chain crosses the membrane as a helical span at residues 630-650 (VLSFWARVVVIIWYFLVLVLT). Residues 651 to 823 (QSYTASLASL…VSFRQLGFDS (173 aa)) lie on the Extracellular side of the membrane. Residues 824-844 (FWVLFLVAAIVCTMALLKFVY) traverse the membrane as a helical segment. Topologically, residues 845–901 (QFLKENPNQRNLRVLWEKFNEPDQKSYIKDVTKCQCSSGQGMPKNGQEGANAVNNGN) are cytoplasmic.

This sequence belongs to the glutamate-gated ion channel (TC 1.A.10.1) family. As to quaternary structure, may form heteromers. Expressed predominantly in roots. First strongly detected in all cell types of the root except at the apex. Later expressed at the root-shoot junction.

It localises to the membrane. In terms of biological role, glutamate-gated receptor that probably acts as a non-selective cation channel. May be involved in light-signal transduction and calcium homeostasis via the regulation of calcium influx into cells. In Arabidopsis thaliana (Mouse-ear cress), this protein is Glutamate receptor 2.1 (GLR2.1).